We begin with the raw amino-acid sequence, 287 residues long: Shikimate kinase (287 aa).

87-97 (PLASGLKSSSA) contributes to the ATP binding site.

Belongs to the GHMP kinase family. Archaeal shikimate kinase subfamily.

It localises to the cytoplasm. The enzyme catalyses shikimate + ATP = 3-phosphoshikimate + ADP + H(+). The protein operates within metabolic intermediate biosynthesis; chorismate biosynthesis; chorismate from D-erythrose 4-phosphate and phosphoenolpyruvate: step 5/7. This chain is Shikimate kinase, found in Methanococcoides burtonii (strain DSM 6242 / NBRC 107633 / OCM 468 / ACE-M).